The sequence spans 251 residues: Zinc import ATP-binding protein ZnuC (251 aa).

In terms of domain architecture, ABC transporter spans 5-220 (VSLENVSVSF…PEFISMFGPR (216 aa)). 37-44 (GPNGAGKS) contributes to the ATP binding site.

The protein belongs to the ABC transporter superfamily. Zinc importer (TC 3.A.1.15.5) family. As to quaternary structure, the complex is composed of two ATP-binding proteins (ZnuC), two transmembrane proteins (ZnuB) and a solute-binding protein (ZnuA).

Its subcellular location is the cell inner membrane. The catalysed reaction is Zn(2+)(out) + ATP(in) + H2O(in) = Zn(2+)(in) + ADP(in) + phosphate(in) + H(+)(in). In terms of biological role, part of the ABC transporter complex ZnuABC involved in zinc import. Responsible for energy coupling to the transport system. The polypeptide is Zinc import ATP-binding protein ZnuC (Shigella dysenteriae serotype 1 (strain Sd197)).